We begin with the raw amino-acid sequence, 63 residues long: Cecropin-A (63 aa).

Positions Met1 to Ala22 are cleaved as a signal peptide. Positions Ala23–Pro26 are excised as a propeptide. At Leu61 the chain carries Leucine amide.

The protein belongs to the cecropin family. Highest expression in fat body and hemocytes. Is also expressed in Malpighian tubules and to a much lesser extent in midgut. Not present in silk gland.

The protein localises to the secreted. In terms of biological role, cecropins have lytic and antibacterial activity against several Gram-positive and Gram-negative bacteria. This Bombyx mori (Silk moth) protein is Cecropin-A (CECA).